The primary structure comprises 564 residues: Dihydroxy-acid dehydratase (564 aa).

[2Fe-2S] cluster is bound at residue C51. D83 is a Mg(2+) binding site. [2Fe-2S] cluster is bound at residue C124. D125 and K126 together coordinate Mg(2+). K126 bears the N6-carboxylysine mark. C196 is a [2Fe-2S] cluster binding site. Residue E448 participates in Mg(2+) binding. S474 functions as the Proton acceptor in the catalytic mechanism.

This sequence belongs to the IlvD/Edd family. In terms of assembly, homodimer. It depends on [2Fe-2S] cluster as a cofactor. Mg(2+) serves as cofactor.

It carries out the reaction (2R)-2,3-dihydroxy-3-methylbutanoate = 3-methyl-2-oxobutanoate + H2O. It catalyses the reaction (2R,3R)-2,3-dihydroxy-3-methylpentanoate = (S)-3-methyl-2-oxopentanoate + H2O. It participates in amino-acid biosynthesis; L-isoleucine biosynthesis; L-isoleucine from 2-oxobutanoate: step 3/4. Its pathway is amino-acid biosynthesis; L-valine biosynthesis; L-valine from pyruvate: step 3/4. Functions in the biosynthesis of branched-chain amino acids. Catalyzes the dehydration of (2R,3R)-2,3-dihydroxy-3-methylpentanoate (2,3-dihydroxy-3-methylvalerate) into 2-oxo-3-methylpentanoate (2-oxo-3-methylvalerate) and of (2R)-2,3-dihydroxy-3-methylbutanoate (2,3-dihydroxyisovalerate) into 2-oxo-3-methylbutanoate (2-oxoisovalerate), the penultimate precursor to L-isoleucine and L-valine, respectively. The sequence is that of Dihydroxy-acid dehydratase from Polynucleobacter asymbioticus (strain DSM 18221 / CIP 109841 / QLW-P1DMWA-1) (Polynucleobacter necessarius subsp. asymbioticus).